The following is a 304-amino-acid chain: Acetylglutamate kinase (304 aa).

Substrate contacts are provided by residues glycine 75–glycine 76, arginine 97, and asparagine 196.

It belongs to the acetylglutamate kinase family. ArgB subfamily.

It localises to the cytoplasm. The enzyme catalyses N-acetyl-L-glutamate + ATP = N-acetyl-L-glutamyl 5-phosphate + ADP. It participates in amino-acid biosynthesis; L-arginine biosynthesis; N(2)-acetyl-L-ornithine from L-glutamate: step 2/4. In terms of biological role, catalyzes the ATP-dependent phosphorylation of N-acetyl-L-glutamate. The chain is Acetylglutamate kinase from Corynebacterium urealyticum (strain ATCC 43042 / DSM 7109).